A 158-amino-acid chain; its full sequence is MAFMVKSMVGGQLKNLTGSLGGGEDKGDGDKSAAEAQGMSREEYEEYQKQLVEEKMERDAQFTQRKAERATLRSHFRDKYRLPKNETDESQIQLAGGDVELPRELAKMIEEDTEEEEDKASVLGQLASLPGLDLSSLKDKAQTTLGDLKQSAEKCHIM.

The tract at residues 14 to 47 (KNLTGSLGGGEDKGDGDKSAAEAQGMSREEYEEY) is disordered. A compositionally biased stretch (basic and acidic residues) spans 23–33 (GEDKGDGDKSA). Residues 39-74 (MSREEYEEYQKQLVEEKMERDAQFTQRKAERATLRS) are a coiled coil. C155 carries the post-translational modification Cysteine methyl ester. Residue C155 is the site of S-farnesyl cysteine attachment. The propeptide at 156–158 (HIM) is removed in mature form.

The protein belongs to the complexin/synaphin family. Binds to the SNARE core complex containing SNAP25, VAMP2 and STX1A. Farnesylation mediates presynaptic targeting. In terms of tissue distribution, present in many brain regions, including hippocampus and cerebellum (at protein level). Expressed in the retina (at protein level). Expressed in retinal amacrine cells (at protein level). Expressed in retinal photoreceptor ribbon synapses. Expressed in the retinal inner nuclear layer, at bipolar cells (at protein level). Expressed in cone photoreceptor synaptic terminals (at protein level).

It localises to the synapse. The protein resides in the cell membrane. In terms of biological role, complexin that regulates SNARE protein complex-mediated synaptic vesicle fusion. Required for the maintenance of synaptic ultrastructure in the adult retina. Positively regulates synaptic transmission through synaptic vesicle availability and exocytosis of neurotransmitters at photoreceptor ribbon synapses in the retina. Suppresses tonic photoreceptor activity and baseline 'noise' by suppression of Ca(2+) vesicle tonic release and the facilitation of evoked synchronous and asynchronous Ca(2+) vesicle release. The polypeptide is Complexin-3 (Cplx3) (Mus musculus (Mouse)).